Reading from the N-terminus, the 1940-residue chain is Myosin-2 (1940 aa).

Positions Asp-33 to Pro-82 constitute a Myosin N-terminal SH3-like domain. 2 positions are modified to phosphothreonine: Thr-64 and Thr-69. Positions Asp-86–Asp-783 constitute a Myosin motor domain. At Lys-130 the chain carries N6,N6,N6-trimethyllysine. Gly-179–Thr-186 provides a ligand contact to ATP. A Phosphotyrosine modification is found at Tyr-389. Phosphoserine is present on Ser-392. Residue Thr-419 is modified to Phosphothreonine. Ser-625 carries the phosphoserine modification. The tract at residues Leu-660–Glu-682 is actin-binding. Residue His-758 is modified to Pros-methylhistidine. The actin-binding stretch occupies residues Lys-762 to Gly-776. The 30-residue stretch at Leu-786–Ser-815 folds into the IQ domain. Residues Leu-844–Glu-1940 adopt a coiled-coil conformation. Phosphoserine is present on residues Ser-1093, Ser-1097, Ser-1163, and Ser-1238. Thr-1242 bears the Phosphothreonine mark. At Ser-1244 the chain carries Phosphoserine. A phosphothreonine mark is found at Thr-1256 and Thr-1287. 4 positions are modified to phosphoserine: Ser-1289, Ser-1293, Ser-1304, and Ser-1307. Tyr-1465 carries the post-translational modification Phosphotyrosine. Thr-1468 carries the post-translational modification Phosphothreonine. At Tyr-1493 the chain carries Phosphotyrosine. Residue Ser-1496 is modified to Phosphoserine. Thr-1502 is subject to Phosphothreonine. The residue at position 1515 (Ser-1515) is a Phosphoserine. Thr-1518 is modified (phosphothreonine). Residues Ser-1543, Ser-1555, Ser-1575, Ser-1601, Ser-1715, and Ser-1727 each carry the phosphoserine modification. Phosphothreonine is present on residues Thr-1731 and Thr-1737. The segment at Gln-1886 to Gln-1905 is disordered.

The protein belongs to the TRAFAC class myosin-kinesin ATPase superfamily. Myosin family. In terms of assembly, muscle myosin is a hexameric protein that consists of 2 heavy chain subunits (MHC), 2 alkali light chain subunits (MLC) and 2 regulatory light chain subunits (MLC-2). Interacts with GCSAM.

It localises to the cytoplasm. Its subcellular location is the myofibril. Myosins are actin-based motor molecules with ATPase activity essential for muscle contraction. The polypeptide is Myosin-2 (MYH2) (Bos taurus (Bovine)).